A 316-amino-acid polypeptide reads, in one-letter code: 2-phospho-L-lactate guanylyltransferase (316 aa).

The segment covering 72–85 (TGVSTEAVSTSTST) has biased composition (low complexity). 2 disordered regions span residues 72–107 (TGVS…PTHT) and 119–138 (LRDD…DGDK). Over residues 92 to 107 (HNAASDNYVSQSPTHT) the composition is skewed to polar residues.

Belongs to the CofC family. Homodimer.

The catalysed reaction is (2S)-2-phospholactate + GTP + H(+) = (2S)-lactyl-2-diphospho-5'-guanosine + diphosphate. The protein operates within cofactor biosynthesis; coenzyme F420 biosynthesis. Functionally, guanylyltransferase that catalyzes the activation of (2S)-2-phospholactate (2-PL) as (2S)-lactyl-2-diphospho-5'-guanosine, via the condensation of 2-PL with GTP. It is involved in the biosynthesis of coenzyme F420, a hydride carrier cofactor. The protein is 2-phospho-L-lactate guanylyltransferase of Haloquadratum walsbyi (strain DSM 16790 / HBSQ001).